Consider the following 291-residue polypeptide: Ribose-phosphate pyrophosphokinase (291 aa).

ATP-binding positions include 34–36 (DGE) and 93–94 (RQ). Mg(2+)-binding residues include His-127 and Asp-165. Lys-188 is an active-site residue. D-ribose 5-phosphate is bound by residues Arg-190, Asp-216, and 220–224 (STGGT).

The protein belongs to the ribose-phosphate pyrophosphokinase family. Class III (archaeal) subfamily. The cofactor is Mg(2+).

It localises to the cytoplasm. It carries out the reaction D-ribose 5-phosphate + ATP = 5-phospho-alpha-D-ribose 1-diphosphate + AMP + H(+). It functions in the pathway metabolic intermediate biosynthesis; 5-phospho-alpha-D-ribose 1-diphosphate biosynthesis; 5-phospho-alpha-D-ribose 1-diphosphate from D-ribose 5-phosphate (route I): step 1/1. In terms of biological role, involved in the biosynthesis of the central metabolite phospho-alpha-D-ribosyl-1-pyrophosphate (PRPP) via the transfer of pyrophosphoryl group from ATP to 1-hydroxyl of ribose-5-phosphate (Rib-5-P). This is Ribose-phosphate pyrophosphokinase from Sulfurisphaera tokodaii (strain DSM 16993 / JCM 10545 / NBRC 100140 / 7) (Sulfolobus tokodaii).